The primary structure comprises 36 residues: MVEPLLAGIVLGLVPVTLAGLFVAAWQQYKRGEEVG.

Residues 5-25 form a helical membrane-spanning segment; that stretch reads LLAGIVLGLVPVTLAGLFVAA.

It belongs to the PetG family. In terms of assembly, the 4 large subunits of the cytochrome b6-f complex are cytochrome b6, subunit IV (17 kDa polypeptide, PetD), cytochrome f and the Rieske protein, while the 4 small subunits are PetG, PetL, PetM and PetN. The complex functions as a dimer.

The protein localises to the cellular thylakoid membrane. Component of the cytochrome b6-f complex, which mediates electron transfer between photosystem II (PSII) and photosystem I (PSI), cyclic electron flow around PSI, and state transitions. PetG is required for either the stability or assembly of the cytochrome b6-f complex. This chain is Cytochrome b6-f complex subunit 5, found in Acaryochloris marina (strain MBIC 11017).